The primary structure comprises 208 residues: Uridine kinase (208 aa).

11–18 contacts ATP; sequence GGTGSGKS.

The protein belongs to the uridine kinase family.

It is found in the cytoplasm. The catalysed reaction is uridine + ATP = UMP + ADP + H(+). It catalyses the reaction cytidine + ATP = CMP + ADP + H(+). It participates in pyrimidine metabolism; CTP biosynthesis via salvage pathway; CTP from cytidine: step 1/3. Its pathway is pyrimidine metabolism; UMP biosynthesis via salvage pathway; UMP from uridine: step 1/1. The polypeptide is Uridine kinase (Clostridium novyi (strain NT)).